A 315-amino-acid chain; its full sequence is Deoxyribonuclease-1-like 1 (315 aa).

The N-terminal stretch at 1-29 is a signal peptide; sequence MDSSGGFQKHTCGHALLLLLLLLAGGAEA. Residues Glu108 and His159 contribute to the active site. Cysteines 198 and 235 form a disulfide. Asn272 carries N-linked (GlcNAc...) asparagine glycosylation.

Belongs to the DNase I family.

It localises to the endoplasmic reticulum. The protein is Deoxyribonuclease-1-like 1 (DNASE1L1) of Sus scrofa (Pig).